The sequence spans 308 residues: MAQLRELRNRIRSVKSTRKITKAQELIATSRIMKAQARVEASRPYADEITNVLTALADASTLDHPLLTERENPKRAGVLVVTSDRGFCGGYNANVLRAAEELQTLLREQGKTPVLYVVGRKGEAYYRFRQREIAKSWTGFTDRPDYSDAADIGETLVKAFLAGADDYLDDGGPDGTLGVDELHLVHTEFVSMITQKPSVKRVAPLEVEYSEEPQKTLRPVYDFEPDADTLFKALLPKYINTRLFAGLLDAAASEHAARRTAMKSATDNADEIIRTLSREANQARQAQITQEISEIVGGVEALSSAGSE.

This sequence belongs to the ATPase gamma chain family. In terms of assembly, F-type ATPases have 2 components, CF(1) - the catalytic core - and CF(0) - the membrane proton channel. CF(1) has five subunits: alpha(3), beta(3), gamma(1), delta(1), epsilon(1). CF(0) has three main subunits: a, b and c.

The protein localises to the cell membrane. Functionally, produces ATP from ADP in the presence of a proton gradient across the membrane. The gamma chain is believed to be important in regulating ATPase activity and the flow of protons through the CF(0) complex. The sequence is that of ATP synthase gamma chain from Saccharopolyspora erythraea (strain ATCC 11635 / DSM 40517 / JCM 4748 / NBRC 13426 / NCIMB 8594 / NRRL 2338).